A 459-amino-acid chain; its full sequence is Cysteine--tRNA ligase (459 aa).

Zn(2+) is bound at residue Cys-28. The 'HIGH' region motif lies at 30–40; sequence MTVYDFCHLGH. 3 residues coordinate Zn(2+): Cys-209, His-234, and Glu-238. The short motif at 266–270 is the 'KMSKS' region element; it reads KMAKS. Lys-269 is a binding site for ATP. The disordered stretch occupies residues 440–459; it reads QARGIELEDTPEGTKWRRTR.

Belongs to the class-I aminoacyl-tRNA synthetase family. In terms of assembly, monomer. Zn(2+) serves as cofactor.

Its subcellular location is the cytoplasm. The catalysed reaction is tRNA(Cys) + L-cysteine + ATP = L-cysteinyl-tRNA(Cys) + AMP + diphosphate. The polypeptide is Cysteine--tRNA ligase (Halorhodospira halophila (strain DSM 244 / SL1) (Ectothiorhodospira halophila (strain DSM 244 / SL1))).